Consider the following 357-residue polypeptide: Ketoreductase CTB6 (357 aa).

An NADP(+)-binding site is contributed by Tyr-172.

This sequence belongs to the NAD(P)-dependent epimerase/dehydratase family. Dihydroflavonol-4-reductase subfamily.

Its pathway is mycotoxin biosynthesis. Ketoreductase; part of the gene cluster that mediates the biosynthesis of cercosporin, a light-activated, non-host-selective toxin. The perylenequinone chromophore of cercosporin absorbs light energy to attain an electronically-activated triplet state and produces active oxygen species such as the hydroxyl radical, superoxide, hydrogen peroxide or singlet oxygen upon reaction with oxygen molecules. These reactive oxygen species cause damage to various cellular components including lipids, proteins and nucleic acids. The first step of cercosporin biosynthesis is performed by the polyketide synthase CTB1 which catalyzes the formation of nor-toralactone. The starter unit acyltransferase (SAT) domain of CTB1 initiates polyketide extension by the selective utilization of acetyl-CoA, which is elongated to the heptaketide in the beta-ketoacyl synthase (KS) domain by successive condensations with six malonyl units introduced by the malonyl acyltransferase (MAT) domain. The product template (PT) domain catalyzes C4-C9 and C2-C11 aldol cyclizations and dehydrations to a trihydroxynaphthalene, which is thought to be delivered to the thioesterase (TE) domain for product release. The bifunctional enzyme CTB3 then methylates nor-toralactone to toralactone before conducting an unusual oxidative aromatic ring opening. The O-methyltransferase CTB2 further methylates the nascent OH-6 of the CBT3 product, blocking further oxidation at this site before the reductase CTB6 reduces the 2-oxopropyl ketone at position C7, giving naphthalene. The FAD-dependent monooxygenase CTB5 in concert with the multicopper oxidase CTB12 are responsible for homodimerization of naphthalene with CTB7 installing the dioxepine moiety, finally producing cercosporin. The fasciclin domain-containing protein CTB11 might act with CTB5 and CTB12 whereas the roles of CTB9 and CTB10 have still to be elucidated. In Cercospora beticola (Sugarbeet leaf spot fungus), this protein is Ketoreductase CTB6.